Reading from the N-terminus, the 214-residue chain is Transcriptional activator protein ExaE (214 aa).

Residues 2–118 (GILLVDDHPM…VVLEAVRRVL (117 aa)) enclose the Response regulatory domain. Asp53 is modified (4-aspartylphosphate). The region spanning 143-208 (GNARLQGLTQ…ELVHLAIEAG (66 aa)) is the HTH luxR-type domain. Residues 167–186 (TRLIAQQLCISAKTVSNYLT) constitute a DNA-binding region (H-T-H motif).

Positive regulator of the expression of the gene qedA and the activity of ADH I but does not affect the activities of ADH IIB or ADH IIG. The polypeptide is Transcriptional activator protein ExaE (Pseudomonas putida (Arthrobacter siderocapsulatus)).